The primary structure comprises 468 residues: ATP synthase subunit beta (468 aa).

G155 to T162 provides a ligand contact to ATP.

Belongs to the ATPase alpha/beta chains family. F-type ATPases have 2 components, CF(1) - the catalytic core - and CF(0) - the membrane proton channel. CF(1) has five subunits: alpha(3), beta(3), gamma(1), delta(1), epsilon(1). CF(0) has three main subunits: a(1), b(2) and c(9-12). The alpha and beta chains form an alternating ring which encloses part of the gamma chain. CF(1) is attached to CF(0) by a central stalk formed by the gamma and epsilon chains, while a peripheral stalk is formed by the delta and b chains.

Its subcellular location is the cell inner membrane. The catalysed reaction is ATP + H2O + 4 H(+)(in) = ADP + phosphate + 5 H(+)(out). Functionally, produces ATP from ADP in the presence of a proton gradient across the membrane. The catalytic sites are hosted primarily by the beta subunits. This is ATP synthase subunit beta from Thermotoga neapolitana (strain ATCC 49049 / DSM 4359 / NBRC 107923 / NS-E).